A 47-amino-acid polypeptide reads, in one-letter code: Accessory gland peptide Acp33A (47 aa).

Positions 1 to 21 (MLPSKRVPFLFTIILFLAGLG) are cleaved as a signal peptide.

Main cells of accessory gland and seminal fluid.

The protein resides in the secreted. Its function is as follows. Responsible for physiological and behavioral changes in mated female flies. This chain is Accessory gland peptide Acp33A (Acp33A), found in Drosophila melanogaster (Fruit fly).